The sequence spans 430 residues: Enolase (430 aa).

Glutamine 164 provides a ligand contact to (2R)-2-phosphoglycerate. The Proton donor role is filled by glutamate 208. Positions 245, 288, and 315 each coordinate Mg(2+). Residues lysine 340, arginine 369, serine 370, and lysine 391 each contribute to the (2R)-2-phosphoglycerate site. Catalysis depends on lysine 340, which acts as the Proton acceptor.

It belongs to the enolase family. The cofactor is Mg(2+).

It is found in the cytoplasm. It localises to the secreted. The protein localises to the cell surface. The catalysed reaction is (2R)-2-phosphoglycerate = phosphoenolpyruvate + H2O. Its pathway is carbohydrate degradation; glycolysis; pyruvate from D-glyceraldehyde 3-phosphate: step 4/5. Functionally, catalyzes the reversible conversion of 2-phosphoglycerate (2-PG) into phosphoenolpyruvate (PEP). It is essential for the degradation of carbohydrates via glycolysis. The protein is Enolase of Pyrococcus furiosus (strain ATCC 43587 / DSM 3638 / JCM 8422 / Vc1).